We begin with the raw amino-acid sequence, 421 residues long: RNA exonuclease 4 (421 aa).

Disordered stretches follow at residues 1 to 51 (MAKA…ETKK) and 79 to 179 (ENQA…QPPK). A compositionally biased stretch (polar residues) spans 11-24 (SPCSGSLGKTANTP). Over residues 25-36 (KQKRKQKQRKFW) the composition is skewed to basic residues. Basic and acidic residues-rich tracts occupy residues 92–107 (PKKDQKVSEKKTEESV), 140–149 (AAEKSDEVSK), and 161–170 (DTEHQGKKPQ). An Exonuclease domain is found at 234 to 385 (TVAMDCEMVG…QDAQAAMRLY (152 aa)).

It belongs to the REXO4 family.

It is found in the nucleus. The chain is RNA exonuclease 4 (rexo4) from Xenopus laevis (African clawed frog).